Reading from the N-terminus, the 131-residue chain is uncharacterized protein (131 aa).

The next 2 membrane-spanning stretches (helical) occupy residues 61–81 and 102–122; these read LLLL…YLPI and VCSI…ALRY.

It localises to the membrane. This is an uncharacterized protein from Saccharomyces cerevisiae (strain ATCC 204508 / S288c) (Baker's yeast).